The chain runs to 604 residues: Glutamine--fructose-6-phosphate aminotransferase [isomerizing] (604 aa).

Cys-2 functions as the Nucleophile; for GATase activity in the catalytic mechanism. A Glutamine amidotransferase type-2 domain is found at 2-218 (CGIVGVVGNT…DKELVIVKKD (217 aa)). SIS domains follow at residues 284 to 423 (IIKS…ANGK) and 456 to 594 (VEQL…VDKP). Lys-599 serves as the catalytic For Fru-6P isomerization activity.

Homodimer.

Its subcellular location is the cytoplasm. The catalysed reaction is D-fructose 6-phosphate + L-glutamine = D-glucosamine 6-phosphate + L-glutamate. Its function is as follows. Catalyzes the first step in hexosamine metabolism, converting fructose-6P into glucosamine-6P using glutamine as a nitrogen source. The sequence is that of Glutamine--fructose-6-phosphate aminotransferase [isomerizing] from Streptococcus agalactiae serotype III (strain NEM316).